We begin with the raw amino-acid sequence, 280 residues long: Nitrogenase iron-iron protein alpha chain (280 aa).

[8Fe-7S] cluster-binding residues include Cys5, Cys31, and Cys94. Cys213 is a [8Fe-9S-C-homocitryl] cluster binding site.

Belongs to the NifD/NifK/NifE/NifN family. Hexamer of two alpha, two beta, and two delta chains. [8Fe-7S] cluster serves as cofactor. [8Fe-9S-C-homocitryl] cluster is required as a cofactor.

The catalysed reaction is N2 + 8 reduced [2Fe-2S]-[ferredoxin] + 16 ATP + 16 H2O = H2 + 8 oxidized [2Fe-2S]-[ferredoxin] + 2 NH4(+) + 16 ADP + 16 phosphate + 6 H(+). In terms of biological role, this iron-iron protein is part of the nitrogenase complex that catalyzes the key enzymatic reactions in nitrogen fixation. Other nitrogenase complexes utilize a molybdenum-iron protein or a vanadium-iron protein. The sequence is that of Nitrogenase iron-iron protein alpha chain (anfD) from Heliomicrobium gestii (Heliobacterium gestii).